We begin with the raw amino-acid sequence, 94 residues long: Large ribosomal subunit protein bL25 (94 aa).

This sequence belongs to the bacterial ribosomal protein bL25 family. Part of the 50S ribosomal subunit; part of the 5S rRNA/L5/L18/L25 subcomplex. Contacts the 5S rRNA. Binds to the 5S rRNA independently of L5 and L18.

Its function is as follows. This is one of the proteins that binds to the 5S RNA in the ribosome where it forms part of the central protuberance. The polypeptide is Large ribosomal subunit protein bL25 (Photorhabdus laumondii subsp. laumondii (strain DSM 15139 / CIP 105565 / TT01) (Photorhabdus luminescens subsp. laumondii)).